A 374-amino-acid chain; its full sequence is uncharacterized protein (374 aa).

It belongs to the mimivirus L41 family.

This is an uncharacterized protein from Acanthamoeba polyphaga (Amoeba).